The following is a 387-amino-acid chain: Proteinase R (387 aa).

The signal sequence occupies residues 1–21 (MRLSILLGLLPLAPRPPAVDA). A propeptide spanning residues 22-108 (VEQRSEPAPL…IEQDAIVNIN (87 aa)) is cleaved from the precursor. In terms of domain architecture, Inhibitor I9 spans 42 to 107 (KYIVKLKEGS…YIEQDAIVNI (66 aa)). Positions 115–387 (PWGLARISST…NLLAYNNYQG (273 aa)) constitute a Peptidase S8 domain. Threonine 124 is a binding site for Ca(2+). 2 disulfide bridges follow: cysteine 142–cysteine 231 and cysteine 286–cysteine 357. Catalysis depends on charge relay system residues aspartate 147 and histidine 177. Aspartate 308 is a Ca(2+) binding site. Serine 332 (charge relay system) is an active-site residue. Residue aspartate 368 coordinates Ca(2+).

Belongs to the peptidase S8 family. Ca(2+) serves as cofactor.

Its function is as follows. Serine proteinase. The protein is Proteinase R (PROR) of Parengyodontium album (Tritirachium album).